The chain runs to 739 residues: UPF0313 protein YgiQ (739 aa).

In terms of domain architecture, Radical SAM core spans 372–650; sequence AYEMIRFSVN…KALLRYHDPA (279 aa). The [4Fe-4S] cluster site is built by cysteine 386, cysteine 390, and cysteine 393. The disordered stretch occupies residues 685-739; sequence REARRQNRNTRPALTKHTPMATQRQTPATAKKASSTQSRPVNAGAKKRPKAAVGR. The segment covering 704-724 has biased composition (polar residues); the sequence is MATQRQTPATAKKASSTQSRP. The segment covering 729-739 has biased composition (basic residues); the sequence is AKKRPKAAVGR.

This sequence belongs to the UPF0313 family. It depends on [4Fe-4S] cluster as a cofactor.

The protein is UPF0313 protein YgiQ (ygiQ) of Escherichia coli (strain K12).